Here is a 145-residue protein sequence, read N- to C-terminus: Superoxide dismutase [Mn/Fe] (145 aa).

The Fe(3+) site is built by His10 and His64. Positions 10 and 64 each coordinate Mn(2+).

Belongs to the iron/manganese superoxide dismutase family. It depends on Mn(2+) as a cofactor. Requires Fe(3+) as cofactor.

It carries out the reaction 2 superoxide + 2 H(+) = H2O2 + O2. Destroys superoxide anion radicals which are normally produced within the cells and which are toxic to biological systems. Catalyzes the dismutation of superoxide anion radicals into O2 and H2O2 by successive reduction and oxidation of the transition metal ion at the active site. The sequence is that of Superoxide dismutase [Mn/Fe] (sodA) from Streptococcus iniae (Streptococcus shiloi).